A 396-amino-acid chain; its full sequence is Putative 2-hydroxyacid dehydrogenase YPL113C (396 aa).

NAD(+)-binding positions include 227–228 (SI), 311–313 (VGR), and Asp-337. The active site involves Arg-313. Residue Glu-342 is part of the active site. Catalysis depends on His-361, which acts as the Proton donor. 361–364 (HIGS) is a binding site for NAD(+).

This sequence belongs to the D-isomer specific 2-hydroxyacid dehydrogenase family.

Its function is as follows. Putative 2-hydroxyacid dehydrogenase. The chain is Putative 2-hydroxyacid dehydrogenase YPL113C from Saccharomyces cerevisiae (strain ATCC 204508 / S288c) (Baker's yeast).